The chain runs to 466 residues: Glutamate decarboxylase alpha (466 aa).

Thr-62 and Asn-83 together coordinate substrate. Pyridoxal 5'-phosphate contacts are provided by residues 126 to 127, Thr-212, and His-275; that span reads SS. Lys-276 is modified (N6-(pyridoxal phosphate)lysine).

The protein belongs to the group II decarboxylase family. Homohexamer. Requires pyridoxal 5'-phosphate as cofactor.

The enzyme catalyses L-glutamate + H(+) = 4-aminobutanoate + CO2. Converts glutamate to gamma-aminobutyrate (GABA), consuming one intracellular proton in the reaction. The gad system helps to maintain a near-neutral intracellular pH when cells are exposed to extremely acidic conditions. The ability to survive transit through the acidic conditions of the stomach is essential for successful colonization of the mammalian host by commensal and pathogenic bacteria. This Escherichia coli O6:H1 (strain CFT073 / ATCC 700928 / UPEC) protein is Glutamate decarboxylase alpha (gadA).